The following is a 673-amino-acid chain: DNA mismatch repair protein MutL (673 aa).

This sequence belongs to the DNA mismatch repair MutL/HexB family.

Functionally, this protein is involved in the repair of mismatches in DNA. It is required for dam-dependent methyl-directed DNA mismatch repair. May act as a 'molecular matchmaker', a protein that promotes the formation of a stable complex between two or more DNA-binding proteins in an ATP-dependent manner without itself being part of a final effector complex. In Ehrlichia chaffeensis (strain ATCC CRL-10679 / Arkansas), this protein is DNA mismatch repair protein MutL.